The primary structure comprises 240 residues: NLKRVTLELGGKSPCIVFADADLDNAVEFAHRGLFFHQGQCCVAASRLFVEESIYDEFVRRSVERAKKYVLGNPLTPGVSQGPQIDKEQYDKIIDLIESGKKEGAKLECGGGPWGNKGYFIQPTVFSNVTDEMRIAKEEIFGPVQQIMKFKSLDEVIKRANNTFYGLAAGVFTKDLDKAVTVSAALQAGTVWVNCYMANSVQCPFGGFKMSGNGRELGEYGLHEYTEVKTVTMKISKKNS.

Catalysis depends on residues glutamate 8 and cysteine 42. An N6-acetyllysine mark is found at lysine 106, lysine 149, lysine 151, and lysine 174.

It belongs to the aldehyde dehydrogenase family. In terms of assembly, homotetramer. In terms of tissue distribution, non-lens specific, predominant form expressed in the liver.

It localises to the cytoplasm. The enzyme catalyses an aldehyde + NAD(+) + H2O = a carboxylate + NADH + 2 H(+). It participates in alcohol metabolism; ethanol degradation; acetate from ethanol: step 2/2. In terms of biological role, elephant shrews, in contrast to other mammals, possess both a lens- and a non-lens specific class-1 aldehyde dehydrogenase. Can convert/oxidize retinaldehyde to retinoic acid. The polypeptide is Aldehyde dehydrogenase, cytosolic 2 (Macroscelides proboscideus (Short-eared elephant shrew)).